We begin with the raw amino-acid sequence, 313 residues long: Ribosomal RNA small subunit methyltransferase H (313 aa).

Residues 34 to 36, Asp-53, Phe-80, Asp-101, and Gln-108 each bind S-adenosyl-L-methionine; that span reads GGH.

It belongs to the methyltransferase superfamily. RsmH family.

The protein localises to the cytoplasm. It catalyses the reaction cytidine(1402) in 16S rRNA + S-adenosyl-L-methionine = N(4)-methylcytidine(1402) in 16S rRNA + S-adenosyl-L-homocysteine + H(+). Specifically methylates the N4 position of cytidine in position 1402 (C1402) of 16S rRNA. The protein is Ribosomal RNA small subunit methyltransferase H of Lacticaseibacillus paracasei (strain ATCC 334 / BCRC 17002 / CCUG 31169 / CIP 107868 / KCTC 3260 / NRRL B-441) (Lactobacillus paracasei).